The chain runs to 626 residues: Chaperone protein HtpG (626 aa).

Positions 1–332 (MTNNDTPGMR…TEDLPLNVSR (332 aa)) are a; substrate-binding. Positions 333 to 546 (EVVQSSKVMA…KDSLDSSMEK (214 aa)) are b. The segment at 547 to 626 (MMKMMHAEMP…ELIEAATMSR (80 aa)) is c.

The protein belongs to the heat shock protein 90 family. As to quaternary structure, homodimer.

It localises to the cytoplasm. In terms of biological role, molecular chaperone. Has ATPase activity. The protein is Chaperone protein HtpG of Chlorobium phaeobacteroides (strain DSM 266 / SMG 266 / 2430).